The sequence spans 204 residues: Neurensin-2 (204 aa).

Helical transmembrane passes span 66 to 86 (LSSG…GYAV) and 122 to 142 (LCVA…IGWL). Positions 178 to 204 (SGQSWFSPPASPFGQSSVQTIQPKRDS) are disordered. A compositionally biased stretch (polar residues) spans 190 to 204 (FGQSSVQTIQPKRDS).

Belongs to the VMP family.

The protein localises to the membrane. In terms of biological role, may play a role in maintenance and/or transport of vesicles. The sequence is that of Neurensin-2 (NRSN2) from Homo sapiens (Human).